A 262-amino-acid polypeptide reads, in one-letter code: uncharacterized protein (262 aa).

This is an uncharacterized protein from Acanthamoeba polyphaga mimivirus (APMV).